The following is a 738-amino-acid chain: MARTPWLPNAYPPARRSDHVDIYKSALRGDVRVQDPYQWLEEYTDETDKWTTAQEVFTRTYLDKNPDLPRLEKAFQACNDYPKSYAPYLHDDNRWYWYYNSGLEPQTALYRSKDSSLPDLSTADGSGGDLFFDPNALSNDGTAALSTYAFSDCGKYFAYGISFSGSDFVTIYVRLTDSPLTKDVDAKNDKGRLPEEIKFVKFSSIGWTPDSKGFFYQRYPDTSTVTQENGPIATEGDLDAMVYYHRLGTPQSEDTLIYQDKEHRDWMFSIDVTDDGNYLLLYILKDSSRQNLLWIAAFDPANLGPNIKWQKVFDEYHSEYEIITNKGSLFYVRTNESAPQYRVITVDIAKGNEINELIPETDAYLSSITSVNKGYFALVYKRNVKDEVYVYSHAGNQLARLAEDFVGAAHVSGREKHSSFFVELNGFTSPGTIGRYKFTDPEEQRWSIYRTTKLNGLNTEDFEASQVWYESKDGTSIPMFIVRHKSTKFDGTAPVIQYGYGGFSISIDPFFSATILTFLQKYGVVFALPNIRGGGEFGEDWHLAGCREKKGNCFDDFIAATQYLVKNKYAAPDKVTINGGSNGGLLVSACVNRAPEGTFGCAVADVGVHDLLKFHKFTIGKAWTSDYGNPDDPNDFDFIFPISPLQNIPKDKVFPPMLLLTADHDDRVVPMHSFKLAAELQYSLPHNPNPLLIRIDKKAGHGAGKSTQQKIKESADKWGFVAQSLGLVWKDSTEQPNL.

Active-site charge relay system residues include Ser581, Asp665, and His701.

Belongs to the peptidase S9A family. In terms of assembly, monomer.

The catalysed reaction is Hydrolysis of Pro-|-Xaa &gt;&gt; Ala-|-Xaa in oligopeptides.. Housekeeping prolyl oligopeptidase (POP) that behaves like a conventional POP by cleaving peptide bonds on the C-terminal side of prolyl residues within peptides that are up to approximately 30 amino acids long. The protein is Prolyl oligopeptidase A of Galerina marginata (strain CBS 339.88).